The chain runs to 286 residues: Undecaprenyl-diphosphatase (286 aa).

7 helical membrane-spanning segments follow: residues 50 to 70 (GAAF…VYFW), 97 to 117 (MGWL…IFQD), 126 to 146 (LWIV…ADAV), 156 to 176 (LTYK…IPGV), 200 to 220 (SFLL…YKVM), 236 to 256 (LATL…LKFV), and 264 to 284 (FVWY…FNVI).

It belongs to the UppP family.

It localises to the cell membrane. The enzyme catalyses di-trans,octa-cis-undecaprenyl diphosphate + H2O = di-trans,octa-cis-undecaprenyl phosphate + phosphate + H(+). Catalyzes the dephosphorylation of undecaprenyl diphosphate (UPP). Confers resistance to bacitracin. This Arthrobacter sp. (strain FB24) protein is Undecaprenyl-diphosphatase.